Here is a 351-residue protein sequence, read N- to C-terminus: Histidinol-phosphate aminotransferase (351 aa).

Lysine 221 is modified (N6-(pyridoxal phosphate)lysine).

It belongs to the class-II pyridoxal-phosphate-dependent aminotransferase family. Histidinol-phosphate aminotransferase subfamily. In terms of assembly, homodimer. Requires pyridoxal 5'-phosphate as cofactor.

It catalyses the reaction L-histidinol phosphate + 2-oxoglutarate = 3-(imidazol-4-yl)-2-oxopropyl phosphate + L-glutamate. It participates in amino-acid biosynthesis; L-histidine biosynthesis; L-histidine from 5-phospho-alpha-D-ribose 1-diphosphate: step 7/9. This Staphylococcus epidermidis (strain ATCC 35984 / DSM 28319 / BCRC 17069 / CCUG 31568 / BM 3577 / RP62A) protein is Histidinol-phosphate aminotransferase.